Consider the following 237-residue polypeptide: tRNA (guanine-N(1)-)-methyltransferase (237 aa).

S-adenosyl-L-methionine contacts are provided by residues G115 and L134–L139.

Belongs to the RNA methyltransferase TrmD family. In terms of assembly, homodimer.

The protein localises to the cytoplasm. The enzyme catalyses guanosine(37) in tRNA + S-adenosyl-L-methionine = N(1)-methylguanosine(37) in tRNA + S-adenosyl-L-homocysteine + H(+). Its function is as follows. Specifically methylates guanosine-37 in various tRNAs. This Synechococcus sp. (strain RCC307) protein is tRNA (guanine-N(1)-)-methyltransferase.